Reading from the N-terminus, the 323-residue chain is Prenyl transferase (323 aa).

Residues lysine 46, arginine 49, and histidine 81 each contribute to the isopentenyl diphosphate site. The Mg(2+) site is built by aspartate 88 and aspartate 92. Arginine 97 contributes to the an all-trans-polyprenyl diphosphate binding site. Arginine 98 serves as a coordination point for isopentenyl diphosphate. An all-trans-polyprenyl diphosphate is bound by residues lysine 174, threonine 175, and glutamine 212.

It belongs to the FPP/GGPP synthase family. The cofactor is Mg(2+).

It is found in the plastid. Its subcellular location is the chloroplast. Possible role in synthesis of the nonaprenyl side chain of plastoquinone or in synthesis of other prenyl chains such as undekaprenyl pyrophosphate. This chain is Prenyl transferase (preA), found in Porphyra purpurea (Red seaweed).